The primary structure comprises 161 residues: MKYDTSELCDIYQEEVNVVEPLFSNFGGRSSFGGQIITVKCFEDNGLLYELLEENGRGRVLLVDGGGSVRRALIDAELARLAVQNEWEGLVVYGAVRQVDDLAELDVGIQALAAIPVGAAGEGIGESDVRVNFGGVTFFSGDHLYADNTGIILSEDPLDIE.

The protein belongs to the RraA family. In terms of assembly, homotrimer. Binds to both RNA-binding sites in the C-terminal region of Rne and to RhlB.

It is found in the cytoplasm. Its function is as follows. Globally modulates RNA abundance by binding to RNase E (Rne) and regulating its endonucleolytic activity. Can modulate Rne action in a substrate-dependent manner by altering the composition of the degradosome. Modulates RNA-binding and helicase activities of the degradosome. The protein is Regulator of ribonuclease activity A of Cronobacter sakazakii (strain ATCC BAA-894) (Enterobacter sakazakii).